The primary structure comprises 569 residues: Archaeosine synthase (569 aa).

Positions 495–569 constitute a PUA domain; the sequence is SGGKDINYIE…ALVNIRNVKS (75 aa).

It belongs to the archaeosine synthase type 1 family. Homodimer.

It catalyses the reaction 7-cyano-7-carbaguanosine(15) in tRNA + L-glutamine + H2O = archaeosine(15) in tRNA + L-glutamate. The protein operates within tRNA modification; archaeosine-tRNA biosynthesis. In terms of biological role, is responsible for the final step in the biosynthesis of archaeosine, a modified nucleoside present in the dihydrouridine loop (D-loop) of archaeal tRNA. Catalyzes the conversion of 7-cyano-7-deazaguanine (preQ0)-modified tRNA to archaeosine-tRNA, transforming a nitrile group to a formamidine group. Can use either glutamine, asparagine or ammonium as amino donor. The protein is Archaeosine synthase of Methanocaldococcus jannaschii (strain ATCC 43067 / DSM 2661 / JAL-1 / JCM 10045 / NBRC 100440) (Methanococcus jannaschii).